A 135-amino-acid chain; its full sequence is Large ribosomal subunit protein uL16c (135 aa).

Belongs to the universal ribosomal protein uL16 family. As to quaternary structure, part of the 50S ribosomal subunit.

The protein resides in the plastid. The protein localises to the chloroplast. The chain is Large ribosomal subunit protein uL16c from Ceratophyllum demersum (Rigid hornwort).